The chain runs to 49 residues: Large ribosomal subunit protein bL33 (49 aa).

Belongs to the bacterial ribosomal protein bL33 family.

This Fervidobacterium nodosum (strain ATCC 35602 / DSM 5306 / Rt17-B1) protein is Large ribosomal subunit protein bL33.